An 80-amino-acid polypeptide reads, in one-letter code: MKLSGMFLLLSLALFCFLTGVFSQGGQVDCGEFQDPKVYCTRESNPHCGSDGQTYGNKCAFCKAIVKSGGKISLKHPGKC.

The N-terminal stretch at 1–23 (MKLSGMFLLLSLALFCFLTGVFS) is a signal peptide. Gln24 is subject to Pyrrolidone carboxylic acid. Residues 24-80 (QGGQVDCGEFQDPKVYCTRESNPHCGSDGQTYGNKCAFCKAIVKSGGKISLKHPGKC) form the Kazal-like domain. Cystine bridges form between Cys30–Cys62, Cys40–Cys59, and Cys48–Cys80.

It localises to the secreted. In terms of biological role, serine protease inhibitor selective for kallikreins. Efficiently inhibits KLK4, KLK5, KLK6, KLK7, KLK12, KLK13 and KLK14. Doesn't inhibit KLK8. This chain is Serine protease inhibitor Kazal-type 6 (SPINK6), found in Homo sapiens (Human).